A 562-amino-acid polypeptide reads, in one-letter code: Arginine--tRNA ligase (562 aa).

The short motif at 129–139 (ANPTGPLHVGH) is the 'HIGH' region element.

It belongs to the class-I aminoacyl-tRNA synthetase family. As to quaternary structure, monomer.

It localises to the cytoplasm. The catalysed reaction is tRNA(Arg) + L-arginine + ATP = L-arginyl-tRNA(Arg) + AMP + diphosphate. This is Arginine--tRNA ligase from Xylella fastidiosa (strain M23).